The chain runs to 210 residues: Redox-sensing transcriptional repressor Rex (210 aa).

Positions 17–56 (KYHRYLYELLKNDVDRISSKELSEKIGFTASQIRQDLNCF) form a DNA-binding region, H-T-H motif. An NAD(+)-binding site is contributed by 91–96 (GAGNIG).

Belongs to the transcriptional regulatory Rex family. Homodimer.

The protein resides in the cytoplasm. In terms of biological role, modulates transcription in response to changes in cellular NADH/NAD(+) redox state. This chain is Redox-sensing transcriptional repressor Rex, found in Clostridium botulinum (strain Loch Maree / Type A3).